The primary structure comprises 287 residues: 4-hydroxybenzoate octaprenyltransferase (287 aa).

6 consecutive transmembrane segments (helical) span residues 41–61, 92–112, 133–153, 160–180, 197–217, and 267–287; these read VSLL…GCAI, VALA…LNAL, FFAI…PMAF, VPLL…AYDT, TSAL…YAVT, and NNWL…AQAF.

Belongs to the UbiA prenyltransferase family. Mg(2+) serves as cofactor.

The protein resides in the cell inner membrane. The enzyme catalyses all-trans-octaprenyl diphosphate + 4-hydroxybenzoate = 4-hydroxy-3-(all-trans-octaprenyl)benzoate + diphosphate. The protein operates within cofactor biosynthesis; ubiquinone biosynthesis. Catalyzes the prenylation of para-hydroxybenzoate (PHB) with an all-trans polyprenyl group. Mediates the second step in the final reaction sequence of ubiquinone-8 (UQ-8) biosynthesis, which is the condensation of the polyisoprenoid side chain with PHB, generating the first membrane-bound Q intermediate 3-octaprenyl-4-hydroxybenzoate. In Paraburkholderia phymatum (strain DSM 17167 / CIP 108236 / LMG 21445 / STM815) (Burkholderia phymatum), this protein is 4-hydroxybenzoate octaprenyltransferase.